The chain runs to 677 residues: MGLAKLVEDYTQSEAASLAQQLRDQLADYSQAYYTQDAPLVEDHVYDELYRDLEQLEAAFPVIVTNDSPTQKVGGQVLPGFTKVTHEIPMLSMGDVFSEAELAAFDQRLRKNTATEIEYNVELKIDGLAIDLIYEKGRFVRGATRGNGTIGEDITQNLKTIKAIPQKLTRPVSIEVRGECYMPKAAFADLNQKREAEGQAPFANPRNAAAGSLRQLDAKVAAARQLSAFIYTIVTFDDVQATTQSEALHVLAELGFNVNPTSVVCQNMAEVQAFIEQYQGTRNDLAYGIDGVVLKVNDLALQRQLGNTVKVPRWEIAYKFPPEEAETVIREIEWTVGRTGVVTPTAVMDPVQLAGTTVARASLHNADMLRDKDVRLLDTVLLHKAGDIIPEISQVVLAKRPSDSQAYGIPTTCPSCGHDLVHLDEEVALRCINPMCPAQMKEQLTHFASRNAMNIDGLGPRIITQLLEKELIHDVADLYRLTADDLAQLDKFKEKSINNLLNAIDASRQNSLERLLFGLGIRHVGAKAARLLAEHFQNLAALMASDQETIITVDTIGTIIADSLVTYFADSQVQTLMAELEAVGVNLTYTGVTKAQAATSDSYFNGKTVVLTGKLEQYTRGELKQLLEDNGAKVTGSVSKKTDALIAGQDAGSKLEKAQSLAIPIINEADLDNYLAQ.

Residues 43 to 47 (DHVYD), 92 to 93 (SM), and Glu122 each bind NAD(+). Catalysis depends on Lys124, which acts as the N6-AMP-lysine intermediate. The NAD(+) site is built by Arg145, Glu179, Lys295, and Lys319. Residues Cys413, Cys416, Cys431, and Cys436 each coordinate Zn(2+). Residues 599 to 677 (TSDSYFNGKT…EADLDNYLAQ (79 aa)) enclose the BRCT domain.

Belongs to the NAD-dependent DNA ligase family. LigA subfamily. Mg(2+) is required as a cofactor. The cofactor is Mn(2+).

The catalysed reaction is NAD(+) + (deoxyribonucleotide)n-3'-hydroxyl + 5'-phospho-(deoxyribonucleotide)m = (deoxyribonucleotide)n+m + AMP + beta-nicotinamide D-nucleotide.. In terms of biological role, DNA ligase that catalyzes the formation of phosphodiester linkages between 5'-phosphoryl and 3'-hydroxyl groups in double-stranded DNA using NAD as a coenzyme and as the energy source for the reaction. It is essential for DNA replication and repair of damaged DNA. This Latilactobacillus sakei subsp. sakei (strain 23K) (Lactobacillus sakei subsp. sakei) protein is DNA ligase.